We begin with the raw amino-acid sequence, 47 residues long: Delta-stichotoxin-Hcr1d (47 aa).

3 disulfide bridges follow: cysteine 3–cysteine 43, cysteine 5–cysteine 33, and cysteine 26–cysteine 44.

It belongs to the sea anemone sodium channel inhibitory toxin family. Type II subfamily.

The protein resides in the secreted. It is found in the nematocyst. Functionally, binds to site 3 of voltage-gated sodium channels and inhibits the inactivation process. This is Delta-stichotoxin-Hcr1d from Radianthus crispa (Leathery sea anemone).